Here is a 118-residue protein sequence, read N- to C-terminus: Co-chaperonin GroES (118 aa).

The protein belongs to the GroES chaperonin family. Heptamer of 7 subunits arranged in a ring. Interacts with the chaperonin GroEL.

The protein resides in the cytoplasm. In terms of biological role, together with the chaperonin GroEL, plays an essential role in assisting protein folding. The GroEL-GroES system forms a nano-cage that allows encapsulation of the non-native substrate proteins and provides a physical environment optimized to promote and accelerate protein folding. GroES binds to the apical surface of the GroEL ring, thereby capping the opening of the GroEL channel. The chain is Co-chaperonin GroES from Helicobacter pylori (strain G27).